A 174-amino-acid polypeptide reads, in one-letter code: Chorion protein S18 (174 aa).

Residues 1 to 17 form the signal peptide; that stretch reads MMKFMCIFICAVAAVSA. Positions 154–165 are enriched in low complexity; the sequence is AAAASSSVAGVA. Residues 154–174 form a disordered region; the sequence is AAAASSSVAGVAKKGYRKSSY.

Belongs to the chorion protein S15/S18 family.

The protein localises to the secreted. Chorion membrane (egg shell) protein; plays a role in protecting the egg from the environment. This chain is Chorion protein S18 (Cp18), found in Drosophila subobscura (Fruit fly).